The chain runs to 478 residues: Glutamate--tRNA ligase (478 aa).

Residues 8–18 carry the 'HIGH' region motif; the sequence is PSPTGYLHLGN. Residues 248–252 carry the 'KMSKS' region motif; that stretch reads KLSKR. Lys-251 lines the ATP pocket.

Belongs to the class-I aminoacyl-tRNA synthetase family. Glutamate--tRNA ligase type 1 subfamily. In terms of assembly, monomer.

Its subcellular location is the cytoplasm. The enzyme catalyses tRNA(Glu) + L-glutamate + ATP = L-glutamyl-tRNA(Glu) + AMP + diphosphate. Its function is as follows. Catalyzes the attachment of glutamate to tRNA(Glu) in a two-step reaction: glutamate is first activated by ATP to form Glu-AMP and then transferred to the acceptor end of tRNA(Glu). The protein is Glutamate--tRNA ligase of Sulfurihydrogenibium sp. (strain YO3AOP1).